The following is a 412-amino-acid chain: Serine--tRNA ligase (412 aa).

228–230 (TAE) is an L-serine binding site. 259–261 (RKE) contacts ATP. Glutamate 282 serves as a coordination point for L-serine. 346-349 (EISS) contacts ATP. Serine 380 contacts L-serine.

It belongs to the class-II aminoacyl-tRNA synthetase family. Type-1 seryl-tRNA synthetase subfamily. As to quaternary structure, homodimer. The tRNA molecule binds across the dimer.

The protein localises to the cytoplasm. It catalyses the reaction tRNA(Ser) + L-serine + ATP = L-seryl-tRNA(Ser) + AMP + diphosphate + H(+). The enzyme catalyses tRNA(Sec) + L-serine + ATP = L-seryl-tRNA(Sec) + AMP + diphosphate + H(+). It participates in aminoacyl-tRNA biosynthesis; selenocysteinyl-tRNA(Sec) biosynthesis; L-seryl-tRNA(Sec) from L-serine and tRNA(Sec): step 1/1. Catalyzes the attachment of serine to tRNA(Ser). Is also able to aminoacylate tRNA(Sec) with serine, to form the misacylated tRNA L-seryl-tRNA(Sec), which will be further converted into selenocysteinyl-tRNA(Sec). This is Serine--tRNA ligase from Aliarcobacter butzleri (strain RM4018) (Arcobacter butzleri).